We begin with the raw amino-acid sequence, 624 residues long: tRNA uridine 5-carboxymethylaminomethyl modification enzyme MnmG (624 aa).

FAD is bound by residues 13–18, valine 125, and serine 180; that span reads GGGHAG. 273–287 contributes to the NAD(+) binding site; the sequence is GPRYCPSIEDKIVRF. Glutamine 370 lines the FAD pocket.

Belongs to the MnmG family. As to quaternary structure, homodimer. Heterotetramer of two MnmE and two MnmG subunits. FAD serves as cofactor.

The protein resides in the cytoplasm. In terms of biological role, NAD-binding protein involved in the addition of a carboxymethylaminomethyl (cmnm) group at the wobble position (U34) of certain tRNAs, forming tRNA-cmnm(5)s(2)U34. The protein is tRNA uridine 5-carboxymethylaminomethyl modification enzyme MnmG of Legionella pneumophila (strain Paris).